Consider the following 744-residue polypeptide: Tripartite motif-containing protein 3 (744 aa).

Ala-2 bears the N-acetylalanine mark. Residues 2 to 290 (AKREDSPGPE…LAAQAFPERP (289 aa)) form an interaction with KIF21B region. Ser-7 is modified (phosphoserine). The segment at 22–63 (CSICLDRYRCPKVLPCLHTFCERCLQNYIPPQSLTLSCPVCR) adopts an RING-type zinc-finger fold. The segment at 110–151 (GRPLSCPNHEGKTMEFYCEACETAMCGECRAGEHREHGTVLL) adopts a B box-type zinc-finger fold. Cys-115, His-118, Cys-138, and His-143 together coordinate Zn(2+). Residues 153 to 224 (DVVEQHKAAL…RKQALVSDLE (72 aa)) adopt a coiled-coil conformation. The Filamin repeat unit spans residues 317–418 (TTSATAHETV…VRGSPFRVRA (102 aa)). Positions 419–464 (LRPGDLPPSPDDVKRRVKSPGGPGSHVRQKAVRRPSSMYSTGGKRK) are disordered. Ser-427 bears the Phosphoserine mark. 6 NHL repeats span residues 473–516 (VFRV…FSNE), 520–563 (KFRF…FSPE), 564–605 (GKFK…FQPN), 609–652 (VGRF…YSAD), 656–699 (LFKF…FDSS), and 700–743 (GSFL…YRYL).

This sequence belongs to the TRIM/RBCC family. Forms homooligomers. Interacts with TRIM2; this interaction reduces TRIM2 activity. Associates with myosin-Vb (MYO5B) and alpha-actinin-4 (ACTN4). Component of the CART complex, at least composed of ACTN4, HGS/HRS, MYO5B and TRIM3. Interacts with ZFYVE28/LST2. Interacts with KIF21B.

It is found in the cytoplasm. The protein resides in the early endosome. Its subcellular location is the golgi apparatus. The protein localises to the trans-Golgi network. It localises to the cell projection. It is found in the dendrite. It catalyses the reaction S-ubiquitinyl-[E2 ubiquitin-conjugating enzyme]-L-cysteine + [acceptor protein]-L-lysine = [E2 ubiquitin-conjugating enzyme]-L-cysteine + N(6)-ubiquitinyl-[acceptor protein]-L-lysine.. E3 ubiquitin ligase that plays essential roles in neuronal functions such as regulation of neuronal plasticity, learning, and memory. In addition to its neuronal functions, participates in other biological processes such as innate immunity or cell cycle regulation. Component of the cytoskeleton-associated recycling or transport complex in neurons, polyubiquitinates gamma-actin, thus regulating neuronal plasticity, learning, and memory. Ubiquitinates postsynaptic scaffold GKAP, a neuronal substrate involved in synaptic remodeling and thereby modulates dendritic spine morphology. Positively regulates motility of microtubule-dependent motor protein KIF21B. Induces growth arrest via its RING-dependent E3 ligase activity and ubiquinates CDKN1A. Positively regulates TLR3-mediated signaling by mediating 'Lys-63'-linked polyubiquitination of TLR3. In turn, promotes the recognition and sorting of polyubiquitinated TLR3 by the ESCRT complexes. This is Tripartite motif-containing protein 3 (Trim3) from Mus musculus (Mouse).